Consider the following 682-residue polypeptide: Beta-galactosidase (682 aa).

Residues 1–23 form the signal peptide; the sequence is MPGFLVRILPLLLPLLLLGPTRG. The propeptide occupies 24 to 28; it reads LRNAT. An N-linked (GlcNAc...) asparagine glycan is attached at asparagine 26. Substrate is bound by residues tyrosine 83, glutamate 129, and asparagine 187. Residue glutamate 188 is the Proton donor of the active site. A disulfide bridge connects residues cysteine 195 and cysteine 230. Asparagine 247 carries an N-linked (GlcNAc...) asparagine glycan. The active-site Nucleophile is the glutamate 268. Tyrosine 333 is a substrate binding site. Residues asparagine 464, asparagine 498, asparagine 545, and asparagine 555 are each glycosylated (N-linked (GlcNAc...) asparagine). Cysteine 626 and cysteine 634 are disulfide-bonded.

This sequence belongs to the glycosyl hydrolase 35 family. In terms of assembly, homodimer. May form higher multimers.

The protein localises to the lysosome. It carries out the reaction Hydrolysis of terminal non-reducing beta-D-galactose residues in beta-D-galactosides.. In terms of biological role, cleaves beta-linked terminal galactosyl residues from gangliosides, glycoproteins, and glycosaminoglycans. The polypeptide is Beta-galactosidase (GLB1) (Macaca fascicularis (Crab-eating macaque)).